The following is a 179-amino-acid chain: Ribosome-recycling factor (179 aa).

This sequence belongs to the RRF family.

It localises to the cytoplasm. In terms of biological role, responsible for the release of ribosomes from messenger RNA at the termination of protein biosynthesis. May increase the efficiency of translation by recycling ribosomes from one round of translation to another. This is Ribosome-recycling factor from Chlamydia trachomatis serovar L2b (strain UCH-1/proctitis).